Here is a 358-residue protein sequence, read N- to C-terminus: Bis(monoacylglycero)phosphate synthase CLN5 (358 aa).

At 1 to 23 the chain is on the cytoplasmic side; that stretch reads MAQEVDTAQGAEMRRGAGAARGR. A helical; Signal-anchor for type II membrane protein transmembrane segment spans residues 24 to 40; the sequence is ASWCWALALLWLAVVPG. At 41–358 the chain is on the lumenal side; the sequence is WSRVSGIPSR…PIRNKTLSGL (318 aa). 2 cysteine pairs are disulfide-bonded: Cys-70–Cys-159 and Cys-77–Cys-165. His-117 acts as the Proton acceptor in catalysis. N-linked (GlcNAc...) asparagine glycans are attached at residues Asn-130, Asn-143, Asn-178, and Asn-203. Cys-231 serves as the catalytic Nucleophile; Acyl-thioester intermediate. 3 N-linked (GlcNAc...) asparagine glycosylation sites follow: Asn-255, Asn-271, and Asn-281. The segment at 304-343 is membrane-anchoring; it reads FLLSLLQIFDAVIVHKQFYLFYNFEYWFLPMKFPFIKITY. An N-linked (GlcNAc...) asparagine glycan is attached at Asn-352.

It belongs to the CLN5 family. In terms of assembly, multimer. Interacts with SORT1, RAB5A and RAB7A. Interacts with PPT1, TPP1, CLN3, CLN6, CLN8, ATP5F1A and ATP5F1B. In terms of processing, N-glycosylated with both high mannose and complex type sugars. Glycosylation is important for proper folding and trafficking to the lysosomes. Post-translationally, the type II membrane signal anchor is proteolytically cleaved to produce a mature form that is transported to the lysosomes (Bis(monoacylglycero)phosphate synthase CLN5, secreted form). Can undergo proteolytic cleavage at the C-terminus, probably by a cysteine protease and may involve the removal of approximately 10-15 residues from the C-terminal end. Ubiquitous.

It localises to the lysosome. Its subcellular location is the membrane. It carries out the reaction S-hexadecanoyl-L-cysteinyl-[protein] + H2O = L-cysteinyl-[protein] + hexadecanoate + H(+). The catalysed reaction is 2 1-acyl-sn-glycero-3-phospho-(1'-sn-glycerol) = 1-acyl-sn-glycero-3-phospho-(3'-acyl-sn-1'-glycerol) + sn-glycero-3-phospho-(1'-sn-glycerol). It catalyses the reaction 2 1-(9Z-octadecenoyl)-sn-glycero-3-phospho-(1'-sn-glycerol) = 1-(9Z-octadecenoyl)-sn-glycero-3-phospho-(3'-(9Z-octadecenoyl)-1'-sn-glycerol) + sn-glycero-3-phospho-(1'-sn-glycerol). The enzyme catalyses 2 1-octadecanoyl-sn-glycero-3-phospho-(1'-sn-glycerol) = 1-octadecanoyl-sn-glycero-3-phospho-(3'-octadecanoyl-1'-sn-glycerol) + sn-glycero-3-phospho-(1'-sn-glycerol). It carries out the reaction 2 1-hexadecanoyl-sn-glycero-3-phospho-(1'-sn-glycerol) = 1-hexadecanoyl-sn-glycero-3-phospho-(3'-hexadecanoyl-1'-sn-glycerol) + sn-glycero-3-phospho-(1'-sn-glycerol). The catalysed reaction is 2 1-tetradecanoyl-sn-glycero-3-phospho-(1'-sn-glycerol) = 1-tetradecanoyl-sn-glycero-3-phospho-(3'-tetradecanoyl-1'-sn-glycerol) + sn-glycero-3-phospho-(1'-sn-glycerol). Anionic phospholipids activate bis(monoacylglycero)phosphate (BMP) synthase activity. Amiodarone, a cationic amphiphilic drug inhibits BMP synthase activity towards liposomal lysophosphatidylglycerol. Palmostatin B inhibits palmitoyl protein thioesterase activity. Functionally, catalyzes the synthesis of bis(monoacylglycero)phosphate (BMP) via transacylation of 2 molecules of lysophosphatidylglycerol (LPG). BMP also known as lysobisphosphatidic acid plays a key role in the formation of intraluminal vesicles and in maintaining intracellular cholesterol homeostasis. Can use only LPG as the exclusive lysophospholipid acyl donor for base exchange and displays BMP synthase activity towards various LPGs (LPG 14:0, LPG 16:0, LPG 18:0, LPG 18:1) with a higher preference for longer chain lengths. Plays a role in influencing the retrograde trafficking of lysosomal sorting receptors SORT1 and IGF2R from the endosomes to the trans-Golgi network by controlling the recruitment of retromer complex to the endosomal membrane. Regulates the localization and activation of RAB7A which is required to recruit the retromer complex to the endosomal membrane. Its function is as follows. Exhibits palmitoyl protein thioesterase (S-depalmitoylation) activity in vitro and most likely plays a role in protein S-depalmitoylation. In Homo sapiens (Human), this protein is Bis(monoacylglycero)phosphate synthase CLN5 (CLN5).